The chain runs to 81 residues: Cortexin-2 (81 aa).

The chain crosses the membrane as a helical span at residues 29 to 49 (TGFAFVGILCIFLGLLIIRCF).

Belongs to the cortexin family.

It localises to the membrane. The chain is Cortexin-2 (Ctxn2) from Mus musculus (Mouse).